The chain runs to 793 residues: MSARTPLPTVNERDTENHTSVDGYTETHIPPTKSSSRQNIPRCRNSITSATDEQPHIGNYRLQKTIGKGNFAKVKLARHVLTGREVAVKIIDKTQLNPTSLQKLFREVRIMKILNHPNIVKLFEVIETEKTLYLVMEYASGGEVFDYLVAHGRMKEKEARAKFRQIVSAVQYCHQKCIVHRDLKAENLLLDADMNIKIADFGFSNEFTVGNKLDTFCGSPPYAAPELFQGKKYDGPEVDVWSLGVILYTLVSGSLPFDGQNLKELRERVLRGKYRVPFYMSTDCENLLKKLLVLNPIKRGSLEQIMKDRWMNVGHEEEELKPYSEPELDLNDAKRIDIMVTMGFARDEINDALVSQKYDEVMATYILLGRKPPEFEGGESLSSGNLCQRSRPSSDLNNSTLQSPAHLKVQRSISANQKQRRFSDHAGPSIPPAVSYTKRPQANSVESEQKEEWDKDTARRLGSTTVGSKSEVTASPLVGPDRKKSSAGPSNNVYSGGSMTRRNTYVCERSTDRYAALQNGRDSSLTEMSASSMSSTGSTVASAGPSARPRHQKSMSTSGHPIKVTLPTIKDGSEAYRPGTAQRVPAASPSAHSISASTPDRTRFPRGSSSRSTFHGEQLRERRSAAYSGPPASPSHDTAALAHARRGTSTGIISKITSKFVRRDPSEGEASGRTDTARGSSGEPKDKEEGKEAKPRSLRFTWSMKTTSSMDPNDMVREIRKVLDANTCDYEQRERFLLFCVHGDARQDSLVQWEMEVCKLPRLSLNGVRFKRISGTSIAFKNIASKIANELKL.

Residues 1–40 form a disordered region; the sequence is MSARTPLPTVNERDTENHTSVDGYTETHIPPTKSSSRQNI. Residue Thr-5 is modified to Phosphothreonine. The Protein kinase domain occupies 60–311; that stretch reads YRLQKTIGKG…LEQIMKDRWM (252 aa). ATP-binding positions include 66-74 and Lys-89; that span reads IGKGNFAKV. Asp-182 serves as the catalytic Proton acceptor. Thr-208 is modified (phosphothreonine). Thr-215 carries the phosphothreonine; by LKB1 and TAOK1 modification. Position 219 is a phosphoserine; by GSK3-beta (Ser-219). The UBA domain maps to 329 to 370; sequence DLNDAKRIDIMVTMGFARDEINDALVSQKYDEVMATYILLGR. 2 disordered regions span residues 377 to 499 and 517 to 697; these read GGES…GGSM and LQNG…KPRS. A compositionally biased stretch (polar residues) spans 380–403; sequence SLSSGNLCQRSRPSSDLNNSTLQS. A phosphoserine mark is found at Ser-382, Ser-390, Ser-393, Ser-403, Ser-423, and Ser-444. Residues 447–459 show a composition bias toward basic and acidic residues; sequence SEQKEEWDKDTAR. Positions 462 to 473 are enriched in polar residues; sequence GSTTVGSKSEVT. Ser-475 carries the phosphoserine modification. Positions 487–499 are enriched in polar residues; it reads AGPSNNVYSGGSM. Low complexity-rich tracts occupy residues 523 to 547 and 585 to 599; these read SSLTEMSASSMSSTGSTVASAGPSA and PAASPSAHSISASTP. Ser-588 is subject to Phosphoserine. Thr-613 is modified (phosphothreonine; by PKC/PRKCZ). The segment covering 647-657 has biased composition (polar residues); sequence GTSTGIISKIT. 2 stretches are compositionally biased toward basic and acidic residues: residues 661–676 and 683–695; these read VRRDPSEGEASGRTDT and EPKDKEEGKEAKP. A Phosphoserine modification is found at Ser-666. Residues 744-793 form the KA1 domain; that stretch reads DARQDSLVQWEMEVCKLPRLSLNGVRFKRISGTSIAFKNIASKIANELKL.

This sequence belongs to the protein kinase superfamily. CAMK Ser/Thr protein kinase family. SNF1 subfamily. Interacts with MAPT/TAU. It depends on Mg(2+) as a cofactor. Post-translationally, phosphorylation at Thr-613 by PRKCZ/aPKC in polarized epithelial cells inhibits the kinase activity. Phosphorylated at Thr-215 by STK11/LKB1 in complex with STE20-related adapter-alpha (STRADA) pseudo kinase and CAB39. Phosphorylation at Thr-215 by TAOK1 activates the kinase activity, leading to phosphorylation and detachment of MAPT/TAU from microtubules. Phosphorylation at Ser-219 by GSK3-beta (GSK3B) inhibits the kinase activity. As to expression, highly expressed in brain and spleen and at lower levels in kidney and skeletal muscle.

It is found in the cell membrane. It localises to the cytoplasm. The protein localises to the cytoskeleton. Its subcellular location is the cell projection. The protein resides in the dendrite. It carries out the reaction L-seryl-[protein] + ATP = O-phospho-L-seryl-[protein] + ADP + H(+). It catalyses the reaction L-threonyl-[protein] + ATP = O-phospho-L-threonyl-[protein] + ADP + H(+). The catalysed reaction is L-seryl-[tau protein] + ATP = O-phospho-L-seryl-[tau protein] + ADP + H(+). The enzyme catalyses L-threonyl-[tau protein] + ATP = O-phospho-L-threonyl-[tau protein] + ADP + H(+). Its activity is regulated as follows. Activated by phosphorylation on Thr-215. Inhibited by phosphorylation at Ser-219. Its function is as follows. Serine/threonine-protein kinase. Involved in cell polarity and microtubule dynamics regulation. Phosphorylates DCX, MAP2 and MAP4. Phosphorylates the microtubule-associated protein MAPT/TAU. Involved in cell polarity by phosphorylating the microtubule-associated proteins MAP2, MAP4 and MAPT/TAU at KXGS motifs, causing detachment from microtubules, and their disassembly. Involved in the regulation of neuronal migration through its dual activities in regulating cellular polarity and microtubule dynamics, possibly by phosphorylating and regulating DCX. Also acts as a positive regulator of the Wnt signaling pathway, probably by mediating phosphorylation of dishevelled proteins (DVL1, DVL2 and/or DVL3). This is Serine/threonine-protein kinase MARK1 from Rattus norvegicus (Rat).